The sequence spans 548 residues: ATP synthase subunit alpha, mitochondrial (548 aa).

209–216 (GDRQTGKT) contacts ATP.

The protein belongs to the ATPase alpha/beta chains family. As to quaternary structure, F-type ATPases have 2 components, CF(1) - the catalytic core - and CF(0) - the membrane proton channel. CF(1) has five subunits: alpha(3), beta(3), gamma(1), delta(1), epsilon(1). CF(0) has three main subunits: a, b and c.

It localises to the mitochondrion. It is found in the mitochondrion inner membrane. Its function is as follows. Mitochondrial membrane ATP synthase (F(1)F(0) ATP synthase or Complex V) produces ATP from ADP in the presence of a proton gradient across the membrane which is generated by electron transport complexes of the respiratory chain. F-type ATPases consist of two structural domains, F(1) - containing the extramembraneous catalytic core, and F(0) - containing the membrane proton channel, linked together by a central stalk and a peripheral stalk. During catalysis, ATP synthesis in the catalytic domain of F(1) is coupled via a rotary mechanism of the central stalk subunits to proton translocation. Subunits alpha and beta form the catalytic core in F(1). Rotation of the central stalk against the surrounding alpha(3)beta(3) subunits leads to hydrolysis of ATP in three separate catalytic sites on the beta subunits. Subunit alpha does not bear the catalytic high-affinity ATP-binding sites. The chain is ATP synthase subunit alpha, mitochondrial (ATP1) from Kluyveromyces lactis (strain ATCC 8585 / CBS 2359 / DSM 70799 / NBRC 1267 / NRRL Y-1140 / WM37) (Yeast).